The following is a 236-amino-acid chain: Small ribosomal subunit protein uS2c (236 aa).

It belongs to the universal ribosomal protein uS2 family.

The protein localises to the plastid. It is found in the chloroplast. This is Small ribosomal subunit protein uS2c (rps2) from Guizotia abyssinica (Niger).